Here is a 72-residue protein sequence, read N- to C-terminus: Exodeoxyribonuclease 7 small subunit (72 aa).

The protein belongs to the XseB family. In terms of assembly, heterooligomer composed of large and small subunits.

The protein localises to the cytoplasm. It carries out the reaction Exonucleolytic cleavage in either 5'- to 3'- or 3'- to 5'-direction to yield nucleoside 5'-phosphates.. In terms of biological role, bidirectionally degrades single-stranded DNA into large acid-insoluble oligonucleotides, which are then degraded further into small acid-soluble oligonucleotides. The chain is Exodeoxyribonuclease 7 small subunit from Chlamydia trachomatis serovar L2 (strain ATCC VR-902B / DSM 19102 / 434/Bu).